Here is a 638-residue protein sequence, read N- to C-terminus: Cytoplasmic dynein 1 intermediate chain 2 (638 aa).

Composition is skewed to basic and acidic residues over residues 1–13 (MSDK…ELER) and 20–43 (QIRE…KKEA). Disordered stretches follow at residues 1-135 (MSDK…GRGP) and 154-209 (VTYT…HELT). S2 is modified (N-acetylserine). S51 bears the Diphosphoserine mark. Phosphoserine is present on residues S51 and S90. A compositionally biased stretch (low complexity) spans 88-97 (PSSKSVSTPS). T95 carries the phosphothreonine modification. Residues S97, S101, and S104 each carry the phosphoserine modification. The segment at 133–165 (RGPIKLGMAKITQVDFPPREIVTYTKETQTPVT) is interaction with DYNLT1. Positions 190–209 (EKILKKDEENDSKAPPHELT) are enriched in basic and acidic residues. WD repeat units lie at residues 277 to 326 (SKHR…TTPE), 330 to 370 (HCQS…RTPV), 379 to 420 (AHTH…HPQD), 429 to 469 (SKAV…AGIS), 474 to 519 (GHQG…PLYS), and 568 to 607 (EGNP…AVPR).

Belongs to the dynein intermediate chain family. In terms of assembly, homodimer. The cytoplasmic dynein 1 complex consists of two catalytic heavy chains (HCs) and a number of non-catalytic subunits presented by intermediate chains (ICs), light intermediate chains (LICs) and light chains (LCs); the composition seems to vary in respect to the IC, LIC and LC composition. The heavy chain homodimer serves as a scaffold for the probable homodimeric assembly of the respective non-catalytic subunits. The ICs and LICs bind directly to the HC dimer and the LCs assemble on the IC dimer. Interacts with DYNLT3. Interacts with DYNLT1. Interacts (dephosphorylated at Ser-90) with DCTN1. Interacts with BICD2. Interacts with SPEF2. Interacts with CFAP61. The phosphorylation status of Ser-90 appears to be involved in dynactin-dependent target binding. In terms of processing, pyrophosphorylation by 5-diphosphoinositol pentakisphosphate (5-IP7) promotes interaction with DCTN1. Serine pyrophosphorylation is achieved by Mg(2+)-dependent, but enzyme independent transfer of a beta-phosphate from a inositol pyrophosphate to a pre-phosphorylated serine residue. In terms of tissue distribution, skeletal muscle, testis, kidney, brain, heart and spleen.

It localises to the cytoplasm. The protein resides in the cytoskeleton. Functionally, acts as one of several non-catalytic accessory components of the cytoplasmic dynein 1 complex that are thought to be involved in linking dynein to cargos and to adapter proteins that regulate dynein function. Cytoplasmic dynein 1 acts as a motor for the intracellular retrograde motility of vesicles and organelles along microtubules. The intermediate chains mediate the binding of dynein to dynactin via its 150 kDa component (p150-glued) DCTN1. Involved in membrane-transport, such as Golgi apparatus, late endosomes and lysosomes. The polypeptide is Cytoplasmic dynein 1 intermediate chain 2 (Dync1i2) (Rattus norvegicus (Rat)).